Here is a 197-residue protein sequence, read N- to C-terminus: ATP-dependent Clp protease proteolytic subunit 1 (197 aa).

The active-site Nucleophile is the Ser-100. His-125 is a catalytic residue.

This sequence belongs to the peptidase S14 family. In terms of assembly, fourteen ClpP subunits assemble into 2 heptameric rings which stack back to back to give a disk-like structure with a central cavity, resembling the structure of eukaryotic proteasomes.

It localises to the cytoplasm. It carries out the reaction Hydrolysis of proteins to small peptides in the presence of ATP and magnesium. alpha-casein is the usual test substrate. In the absence of ATP, only oligopeptides shorter than five residues are hydrolyzed (such as succinyl-Leu-Tyr-|-NHMec, and Leu-Tyr-Leu-|-Tyr-Trp, in which cleavage of the -Tyr-|-Leu- and -Tyr-|-Trp bonds also occurs).. Cleaves peptides in various proteins in a process that requires ATP hydrolysis. Has a chymotrypsin-like activity. Plays a major role in the degradation of misfolded proteins. This is ATP-dependent Clp protease proteolytic subunit 1 from Gloeobacter violaceus (strain ATCC 29082 / PCC 7421).